The following is a 340-amino-acid chain: Phospho-N-acetylmuramoyl-pentapeptide-transferase (340 aa).

10 consecutive transmembrane segments (helical) span residues 5-25 (FILS…HLIN), 50-70 (TPTM…IIWT), 73-93 (SNPY…IGFI), 113-133 (FSLL…IIND), 147-167 (IIFN…IGTS), 178-198 (GLAI…SFIS), 218-238 (LTII…FNTY), 242-262 (IFMG…ISVL), 267-287 (ILLI…IIQV), and 318-338 (IIRF…MLKV).

The protein belongs to the glycosyltransferase 4 family. MraY subfamily. Mg(2+) serves as cofactor.

It localises to the cell membrane. It catalyses the reaction UDP-N-acetyl-alpha-D-muramoyl-L-alanyl-gamma-D-glutamyl-meso-2,6-diaminopimeloyl-D-alanyl-D-alanine + di-trans,octa-cis-undecaprenyl phosphate = di-trans,octa-cis-undecaprenyl diphospho-N-acetyl-alpha-D-muramoyl-L-alanyl-D-glutamyl-meso-2,6-diaminopimeloyl-D-alanyl-D-alanine + UMP. It functions in the pathway cell wall biogenesis; peptidoglycan biosynthesis. Catalyzes the initial step of the lipid cycle reactions in the biosynthesis of the cell wall peptidoglycan: transfers peptidoglycan precursor phospho-MurNAc-pentapeptide from UDP-MurNAc-pentapeptide onto the lipid carrier undecaprenyl phosphate, yielding undecaprenyl-pyrophosphoryl-MurNAc-pentapeptide, known as lipid I. The protein is Phospho-N-acetylmuramoyl-pentapeptide-transferase of Buchnera aphidicola subsp. Baizongia pistaciae (strain Bp).